Reading from the N-terminus, the 104-residue chain is Cell division protein FtsL (104 aa).

At 1-20 the chain is on the cytoplasmic side; sequence MSKPSLTLPRIVLHDLWQHK. The helical transmembrane segment at 21-43 threads the bilayer; it reads WILLLALLVLSNAVAVVYTSHVS. At 44 to 104 the chain is on the periplasmic side; that stretch reads RKLTTEWDQL…PSEEIVVKVP (61 aa).

The protein belongs to the FtsL family. Part of a complex composed of FtsB, FtsL and FtsQ.

Its subcellular location is the cell inner membrane. Essential cell division protein. May link together the upstream cell division proteins, which are predominantly cytoplasmic, with the downstream cell division proteins, which are predominantly periplasmic. This chain is Cell division protein FtsL, found in Shewanella oneidensis (strain ATCC 700550 / JCM 31522 / CIP 106686 / LMG 19005 / NCIMB 14063 / MR-1).